A 486-amino-acid polypeptide reads, in one-letter code: Aspartyl/glutamyl-tRNA(Asn/Gln) amidotransferase subunit B (486 aa).

Belongs to the GatB/GatE family. GatB subfamily. Heterotrimer of A, B and C subunits.

The enzyme catalyses L-glutamyl-tRNA(Gln) + L-glutamine + ATP + H2O = L-glutaminyl-tRNA(Gln) + L-glutamate + ADP + phosphate + H(+). It carries out the reaction L-aspartyl-tRNA(Asn) + L-glutamine + ATP + H2O = L-asparaginyl-tRNA(Asn) + L-glutamate + ADP + phosphate + 2 H(+). In terms of biological role, allows the formation of correctly charged Asn-tRNA(Asn) or Gln-tRNA(Gln) through the transamidation of misacylated Asp-tRNA(Asn) or Glu-tRNA(Gln) in organisms which lack either or both of asparaginyl-tRNA or glutaminyl-tRNA synthetases. The reaction takes place in the presence of glutamine and ATP through an activated phospho-Asp-tRNA(Asn) or phospho-Glu-tRNA(Gln). In Leptospira borgpetersenii serovar Hardjo-bovis (strain L550), this protein is Aspartyl/glutamyl-tRNA(Asn/Gln) amidotransferase subunit B.